The chain runs to 315 residues: Acetaldehyde dehydrogenase 1 (315 aa).

12 to 15 (SGNI) contributes to the NAD(+) binding site. The active-site Acyl-thioester intermediate is cysteine 132. Residues 163-171 (SAGPGTRAN) and asparagine 291 contribute to the NAD(+) site.

It belongs to the acetaldehyde dehydrogenase family.

The catalysed reaction is acetaldehyde + NAD(+) + CoA = acetyl-CoA + NADH + H(+). This chain is Acetaldehyde dehydrogenase 1, found in Paraburkholderia phymatum (strain DSM 17167 / CIP 108236 / LMG 21445 / STM815) (Burkholderia phymatum).